Here is a 416-residue protein sequence, read N- to C-terminus: Probable intermembrane transport protein HI_1671 (416 aa).

The next 8 membrane-spanning stretches (helical) occupy residues isoleucine 62 to isoleucine 82, isoleucine 107 to leucine 127, valine 138 to leucine 158, glutamate 172 to isoleucine 192, leucine 263 to leucine 283, phenylalanine 306 to methionine 326, leucine 347 to leucine 367, and isoleucine 377 to methionine 397.

This sequence belongs to the PqiA family.

The protein localises to the cell inner membrane. The protein is Probable intermembrane transport protein HI_1671 of Haemophilus influenzae (strain ATCC 51907 / DSM 11121 / KW20 / Rd).